The following is a 4467-amino-acid chain: Protocadherin-like protein (4467 aa).

A signal peptide spans Met-1–Thr-22. 28 consecutive Cadherin domains span residues Ala-23–Phe-128, Pro-129–Phe-238, Glu-239–Phe-350, Gln-351–Phe-455, Asn-459–Phe-566, Ser-567–Phe-664, Lys-665–Phe-764, Ser-765–Phe-884, Ser-885–Phe-994, Glu-1092–Phe-1197, Ser-1290–Phe-1395, Ser-1396–Phe-1499, Gly-1495–Phe-1597, Ser-1601–Arg-1701, Thr-1793–Phe-1891, Ser-1892–Phe-1992, Glu-1993–Phe-2100, Leu-2101–Phe-2202, Thr-2203–Phe-2312, Leu-2313–Phe-2423, Pro-2425–Phe-2529, Lys-2530–Phe-2639, Pro-2640–Phe-2746, Asp-2747–Phe-2849, Pro-2850–Phe-2954, Asn-2955–Phe-3062, Val-3063–Phe-3170, and Arg-3173–Asp-3288. Residues Ala-23–Ala-4258 lie on the Extracellular side of the membrane. The EGF-like 1 domain maps to Pro-3551–Gln-3589. Disulfide bonds link Cys-3555/Cys-3567, Cys-3561/Cys-3577, Cys-3579/Cys-3588, Cys-3762/Cys-3788, Cys-3794/Cys-3803, Cys-3797/Cys-3812, and Cys-3814/Cys-3823. The Laminin G-like 1 domain maps to Ser-3590–Cys-3788. In terms of domain architecture, EGF-like 2 spans Leu-3790–Asp-3824. The Laminin G-like 2 domain occupies Val-3842–Ser-4096. The tract at residues Ile-4089–Val-4118 is disordered. Over residues Ser-4096–Val-4118 the composition is skewed to gly residues. The EGF-like 3 domain occupies Pro-4206–Glu-4238. 3 disulfides stabilise this stretch: Cys-4207-Cys-4218, Cys-4212-Cys-4226, and Cys-4228-Cys-4237. Residues Val-4259–Leu-4279 form a helical membrane-spanning segment. Topologically, residues Lys-4280–Glu-4467 are cytoplasmic. The interval Asp-4424 to Glu-4445 is disordered.

In terms of tissue distribution, component of the acid-insoluble organic matrix of the aragonitic skeleton (at protein level).

The protein resides in the membrane. This chain is Protocadherin-like protein, found in Acropora millepora (Staghorn coral).